Here is a 2108-residue protein sequence, read N- to C-terminus: Kinesin-like protein KIF26B (2108 aa).

Disordered regions lie at residues 1–124 and 263–287; these read MNSV…PGSD and KHGS…PTHQ. Residues 40 to 50 show a composition bias toward basic and acidic residues; it reads WYRKAYEESRA. Residues 58-98 are compositionally biased toward low complexity; that stretch reads GAGSALGSSGTPSPGSGTSSPSSFTGSPGPASPGIGTSSPG. Positions 99–120 are enriched in gly residues; it reads SLGGSPGFGTGSPGSGSGGGSS. One can recognise a Kinesin motor domain in the interval 450–801; sequence KVKVMLRICS…IQIASRVLRM (352 aa). 546-553 serves as a coordination point for ATP; it reads GHAKLGKS. 7 disordered regions span residues 805-825, 876-917, 937-1166, 1406-1504, 1519-1653, 1685-1799, and 1824-1974; these read KTKY…GRMR, SDKE…GKSE, DGSE…ESKK, EPEA…PVTD, GLAT…SSSK, AESL…ASKL, and RAGP…WVDG. The span at 1004-1046 shows a compositional bias: low complexity; that stretch reads SHSPVPAAAPAHSPSPASPRSVPGSSSQHSASPLVQSPSLQSS. Residues 1424–1461 are compositionally biased toward basic and acidic residues; it reads RESKENSAKKEMKFEDPWLKREEEVKKETAHPNEEGMM. Residues 1491–1500 are compositionally biased toward low complexity; the sequence is SSSSGEVSAS. Polar residues-rich tracts occupy residues 1521–1537 and 1611–1628; these read ATQS…SSSL and RASP…SPLN. Low complexity-rich tracts occupy residues 1713–1730 and 1751–1763; these read SAGT…AGQS and STTK…TKSL. A compositionally biased stretch (polar residues) spans 1781–1795; sequence PWSTQSLSRNRSSGL. Over residues 1824–1836 the composition is skewed to low complexity; the sequence is RAGPEAEARGGAL. Residue Thr1855 is modified to Phosphothreonine. 2 stretches are compositionally biased toward polar residues: residues 1866–1875 and 1907–1925; these read GHGSDNSSVL and ATGS…SSSV. The segment covering 1930-1948 has biased composition (basic residues); the sequence is RSLKTPKKRSNPGSQRRRL. Over residues 1954-1968 the composition is skewed to polar residues; the sequence is LDTSSPVRKPPNSTG. Ser1958 is modified (phosphoserine).

This sequence belongs to the TRAFAC class myosin-kinesin ATPase superfamily. Kinesin family. KIF26 subfamily. In terms of assembly, interacts with MYH10. Phosphorylation at Thr-1855 and Ser-1958 by CDKs, mainly CDK2 and CDK5, enhances the interaction with NEDD4, polyubiquitination, and subsequent proteasomal degradation. Phosphorylation occurs upon loss of interaction with microtubules. In terms of processing, polyubiquitinated by NEDD4, resulting in proteasomal degradation.

It localises to the cytoplasm. The protein localises to the cytoskeleton. In terms of biological role, essential for embryonic kidney development. Plays an important role in the compact adhesion between mesenchymal cells adjacent to the ureteric buds, possibly by interacting with MYH10. This could lead to the establishment of the basolateral integrity of the mesenchyme and the polarized expression of ITGA8, which maintains the GDNF expression required for further ureteric bud attraction. Although it seems to lack ATPase activity it is constitutively associated with microtubules. This chain is Kinesin-like protein KIF26B (KIF26B), found in Homo sapiens (Human).